The chain runs to 192 residues: Large ribosomal subunit protein bL9 (192 aa).

The interval 173-192 (ALRPEDFFDPEADGVDEDEA) is disordered. The segment covering 179 to 192 (FFDPEADGVDEDEA) has biased composition (acidic residues).

This sequence belongs to the bacterial ribosomal protein bL9 family.

In terms of biological role, binds to the 23S rRNA. The polypeptide is Large ribosomal subunit protein bL9 (rplI) (Rhizobium leguminosarum bv. trifolii).